Here is a 138-residue protein sequence, read N- to C-terminus: Basic phospholipase A2 homolog Tpu-K49a (138 aa).

A signal peptide spans 1–16 (MRTLWIMAVLLVGVEG). 6 disulfides stabilise this stretch: Cys42/Cys131, Cys44/Cys60, Cys59/Cys111, Cys65/Cys138, Cys66/Cys104, and Cys91/Cys102. Positions 121–133 (KKERINTKIFCKK) are important for membrane-damaging activities in eukaryotes and bacteria; heparin-binding.

Monomer. In terms of tissue distribution, expressed by the venom gland.

Its subcellular location is the secreted. Functionally, snake venom phospholipase A2 homolog that lacks catalytic activity. Induces local edema a few hours after injection in the hind foot. Is myotoxic. A model of myotoxic mechanism has been proposed: an apo Lys49-PLA2 is activated by the entrance of a hydrophobic molecule (e.g. fatty acid) at the hydrophobic channel of the protein leading to a reorientation of a monomer. This reorientation causes a transition between 'inactive' to 'active' states, causing alignment of C-terminal and membrane-docking sites (MDoS) side-by-side and putting the membrane-disruption sites (MDiS) in the same plane, exposed to solvent and in a symmetric position for both monomers. The MDoS region stabilizes the toxin on membrane by the interaction of charged residues with phospholipid head groups. Subsequently, the MDiS region destabilizes the membrane with penetration of hydrophobic residues. This insertion causes a disorganization of the membrane, allowing an uncontrolled influx of ions (i.e. calcium and sodium), and eventually triggering irreversible intracellular alterations and cell death. This chain is Basic phospholipase A2 homolog Tpu-K49a, found in Craspedocephalus puniceus (Flat-nosed pitviper).